The chain runs to 539 residues: Cytochrome c oxidase subunit 1 homolog, bacteroid (539 aa).

The next 3 helical transmembrane spans lie at 4 to 24 (TVEM…AGLA), 28 to 48 (LFGA…LVLM), and 75 to 95 (GVVA…VVAL). Residue histidine 117 coordinates heme b. Transmembrane regions (helical) follow at residues 118 to 138 (TSAV…FYVV), 154 to 174 (FVFW…LLGI), 187 to 207 (VDLW…GTIM), 214 to 234 (IYVA…LHVV), 265 to 285 (GHNA…YYFI), 298 to 318 (LSII…PHHL), 330 to 350 (LGMV…INGL), and 368 to 388 (MMVM…MMSI). Cu cation is bound by residues histidine 266, histidine 316, and histidine 317. 2 residues coordinate heme b: histidine 404 and histidine 406. 4 consecutive transmembrane segments (helical) span residues 405–425 (VHSG…YYLV), 443–463 (HFWL…VAGI), 475–495 (QGFL…YYVM), and 499–519 (GGAL…MTIL).

It belongs to the heme-copper respiratory oxidase family. The cofactor is Cu(2+). Requires heme b as cofactor.

Its subcellular location is the cell membrane. The catalysed reaction is 4 Fe(II)-[cytochrome c] + O2 + 8 H(+)(in) = 4 Fe(III)-[cytochrome c] + 2 H2O + 4 H(+)(out). It participates in energy metabolism; oxidative phosphorylation. Functionally, cytochrome c oxidase is the component of the respiratory chain that catalyzes the reduction of oxygen to water. Subunits 1-3 form the functional core of the enzyme complex. Co I is the catalytic subunit of the enzyme. Electrons originating in cytochrome c or a quinol are transferred to the bimetallic center formed by a high-spin heme and copper B. The protein is Cytochrome c oxidase subunit 1 homolog, bacteroid (fixN) of Rhizobium meliloti (strain 1021) (Ensifer meliloti).